The following is a 273-amino-acid chain: Large ribosomal subunit protein uL2cz/uL2cy (273 aa).

2 disordered regions span residues Met-1 to Val-22 and Pro-225 to Lys-273.

It belongs to the universal ribosomal protein uL2 family. In terms of assembly, part of the 50S ribosomal subunit.

It is found in the plastid. It localises to the chloroplast. The chain is Large ribosomal subunit protein uL2cz/uL2cy (rpl2-A) from Zea mays (Maize).